A 614-amino-acid chain; its full sequence is DNA mismatch repair protein MutL (614 aa).

It belongs to the DNA mismatch repair MutL/HexB family.

In terms of biological role, this protein is involved in the repair of mismatches in DNA. It is required for dam-dependent methyl-directed DNA mismatch repair. May act as a 'molecular matchmaker', a protein that promotes the formation of a stable complex between two or more DNA-binding proteins in an ATP-dependent manner without itself being part of a final effector complex. In Leptospira biflexa serovar Patoc (strain Patoc 1 / ATCC 23582 / Paris), this protein is DNA mismatch repair protein MutL.